Reading from the N-terminus, the 299-residue chain is ATP phosphoribosyltransferase (299 aa).

This sequence belongs to the ATP phosphoribosyltransferase family. Long subfamily. As to quaternary structure, equilibrium between an active dimeric form, an inactive hexameric form and higher aggregates. Interconversion between the various forms is largely reversible and is influenced by the natural substrates and inhibitors of the enzyme. Requires Mg(2+) as cofactor.

The protein resides in the cytoplasm. It carries out the reaction 1-(5-phospho-beta-D-ribosyl)-ATP + diphosphate = 5-phospho-alpha-D-ribose 1-diphosphate + ATP. It functions in the pathway amino-acid biosynthesis; L-histidine biosynthesis; L-histidine from 5-phospho-alpha-D-ribose 1-diphosphate: step 1/9. With respect to regulation, feedback inhibited by histidine. Its function is as follows. Catalyzes the condensation of ATP and 5-phosphoribose 1-diphosphate to form N'-(5'-phosphoribosyl)-ATP (PR-ATP). Has a crucial role in the pathway because the rate of histidine biosynthesis seems to be controlled primarily by regulation of HisG enzymatic activity. This Escherichia fergusonii (strain ATCC 35469 / DSM 13698 / CCUG 18766 / IAM 14443 / JCM 21226 / LMG 7866 / NBRC 102419 / NCTC 12128 / CDC 0568-73) protein is ATP phosphoribosyltransferase.